The sequence spans 238 residues: 6-phosphogluconolactonase (238 aa).

The protein belongs to the glucosamine/galactosamine-6-phosphate isomerase family. 6-phosphogluconolactonase subfamily.

It catalyses the reaction 6-phospho-D-glucono-1,5-lactone + H2O = 6-phospho-D-gluconate + H(+). The protein operates within carbohydrate degradation; pentose phosphate pathway; D-ribulose 5-phosphate from D-glucose 6-phosphate (oxidative stage): step 2/3. In terms of biological role, hydrolysis of 6-phosphogluconolactone to 6-phosphogluconate. The protein is 6-phosphogluconolactonase (pgl) of Mesorhizobium japonicum (strain LMG 29417 / CECT 9101 / MAFF 303099) (Mesorhizobium loti (strain MAFF 303099)).